The sequence spans 667 residues: Mannosyl-oligosaccharide alpha-1,2-mannosidase IA (667 aa).

Over 1–18 (MYRISPIGRKSNFHSREK) the chain is Cytoplasmic. The chain crosses the membrane as a helical; Signal-anchor for type II membrane protein span at residues 19–39 (CLIGLVLVTLCFLCFGGIFLL). At 40–667 (PDNFGSDRVL…PVTLPVSNAS (628 aa)) the chain is on the lumenal side. Residues 154–192 (GDNAASQASSHPQSSAQQHNQQQPQLPLGGGGNDQAPDT) form a disordered region. The segment covering 156–178 (NAASQASSHPQSSAQQHNQQQPQ) has biased composition (low complexity). A glycan (N-linked (GlcNAc...) asparagine) is linked at Asn278. Cysteines 483 and 515 form a disulfide. Catalysis depends on Glu529, which acts as the Proton donor. Thr640 provides a ligand contact to Ca(2+).

The protein belongs to the glycosyl hydrolase 47 family. It depends on Ca(2+) as a cofactor. Mg(2+) serves as cofactor. Complex spatial distribution during embryogenesis, including expression in lobula plate giant neurons. Also expressed in adult wing and eyes.

It localises to the golgi apparatus membrane. It carries out the reaction N(4)-(alpha-D-Man-(1-&gt;2)-alpha-D-Man-(1-&gt;2)-alpha-D-Man-(1-&gt;3)-[alpha-D-Man-(1-&gt;2)-alpha-D-Man-(1-&gt;3)-[alpha-D-Man-(1-&gt;2)-alpha-D-Man-(1-&gt;6)]-alpha-D-Man-(1-&gt;6)]-beta-D-Man-(1-&gt;4)-beta-D-GlcNAc-(1-&gt;4)-beta-D-GlcNAc)-L-asparaginyl-[protein] (N-glucan mannose isomer 9A1,2,3B1,2,3) + 4 H2O = N(4)-(alpha-D-Man-(1-&gt;3)-[alpha-D-Man-(1-&gt;3)-[alpha-D-Man-(1-&gt;6)]-alpha-D-Man-(1-&gt;6)]-beta-D-Man-(1-&gt;4)-beta-D-GlcNAc-(1-&gt;4)-beta-D-GlcNAc)-L-asparaginyl-[protein] (N-glucan mannose isomer 5A1,2) + 4 beta-D-mannose. The catalysed reaction is N(4)-(alpha-D-Man-(1-&gt;2)-alpha-D-Man-(1-&gt;2)-alpha-D-Man-(1-&gt;3)-[alpha-D-Man-(1-&gt;3)-[alpha-D-Man-(1-&gt;2)-alpha-D-Man-(1-&gt;6)]-alpha-D-Man-(1-&gt;6)]-beta-D-Man-(1-&gt;4)-beta-D-GlcNAc-(1-&gt;4)-beta-D-GlcNAc)-L-asparaginyl-[protein] (N-glucan mannose isomer 8A1,2,3B1,3) + 3 H2O = N(4)-(alpha-D-Man-(1-&gt;3)-[alpha-D-Man-(1-&gt;3)-[alpha-D-Man-(1-&gt;6)]-alpha-D-Man-(1-&gt;6)]-beta-D-Man-(1-&gt;4)-beta-D-GlcNAc-(1-&gt;4)-beta-D-GlcNAc)-L-asparaginyl-[protein] (N-glucan mannose isomer 5A1,2) + 3 beta-D-mannose. It functions in the pathway protein modification; protein glycosylation. Involved in the maturation of Asn-linked oligosaccharides. Progressively trim alpha-1,2-linked mannose residues from Man(9)GlcNAc(2) to produce Man(5)GlcNAc(2). The protein is Mannosyl-oligosaccharide alpha-1,2-mannosidase IA of Drosophila melanogaster (Fruit fly).